We begin with the raw amino-acid sequence, 174 residues long: MARKPARMWRRLERPYTRTEYIDGAPGTRVRMFDMGNKSADFPVMLTLVAKEAVQIRENALEAARVVANKYVSRRAGASNYKLKLRIFPHHILREHKMAVGAGADRISQGMRAAFGKPVGRAARVKPGTKIMSVWVKPEHFEIAKEALRRAAMKMPTPTKIVVEKGHELLKGKI.

The protein belongs to the universal ribosomal protein uL16 family.

The sequence is that of Large ribosomal subunit protein uL16 from Archaeoglobus fulgidus (strain ATCC 49558 / DSM 4304 / JCM 9628 / NBRC 100126 / VC-16).